Here is an 834-residue protein sequence, read N- to C-terminus: Copper-exporting P-type ATPase (834 aa).

HMA domains lie at 3–64 and 99–162; these read QTID…YDAS and DSQQ…YGAE. Residues C14, C17, C110, and C113 each coordinate Cu(+). A run of 6 helical transmembrane segments spans residues 187–207, 218–238, 254–274, 284–304, 438–458, and 464–484; these read WQAI…MIGD, LWLV…GHFY, TLVA…NLWP, LYYE…MLEA, AVFV…WYFF, and IVYT…CALG. D523 functions as the 4-aspartylphosphate intermediate in the catalytic mechanism. 2 residues coordinate Mg(2+): D720 and D724. 2 consecutive transmembrane segments (helical) span residues 779–799 and 801–821; these read LGAF…LWPF and GTLL…ITVV.

It belongs to the cation transport ATPase (P-type) (TC 3.A.3) family. Type IB subfamily.

It is found in the cell inner membrane. The protein resides in the cytoplasm. The catalysed reaction is Cu(+)(in) + ATP + H2O = Cu(+)(out) + ADP + phosphate + H(+). Functionally, involved in Cu(+) export. In terms of biological role, probably also encodes a cytoplasmic copper chaperone CopA(Z) that is produced by programmed ribosomal frameshifting. The protein is Copper-exporting P-type ATPase (copA) of Escherichia coli O157:H7.